A 213-amino-acid polypeptide reads, in one-letter code: Uracil phosphoribosyltransferase (213 aa).

Residues R78, R103, and 130-138 (DPMLATGGS) each bind 5-phospho-alpha-D-ribose 1-diphosphate. Residues I193 and 198 to 200 (GDA) each bind uracil. 5-phospho-alpha-D-ribose 1-diphosphate is bound at residue D199.

The protein belongs to the UPRTase family. It depends on Mg(2+) as a cofactor.

The catalysed reaction is UMP + diphosphate = 5-phospho-alpha-D-ribose 1-diphosphate + uracil. It functions in the pathway pyrimidine metabolism; UMP biosynthesis via salvage pathway; UMP from uracil: step 1/1. Allosterically activated by GTP. Catalyzes the conversion of uracil and 5-phospho-alpha-D-ribose 1-diphosphate (PRPP) to UMP and diphosphate. In Bordetella pertussis (strain Tohama I / ATCC BAA-589 / NCTC 13251), this protein is Uracil phosphoribosyltransferase.